A 137-amino-acid chain; its full sequence is Small ribosomal subunit protein uS12 (137 aa).

Disordered regions lie at residues 1 to 21 (MPTI…KSKS) and 33 to 57 (KVQT…TPRK). Asp-102 is modified (3-methylthioaspartic acid).

The protein belongs to the universal ribosomal protein uS12 family. As to quaternary structure, part of the 30S ribosomal subunit. Contacts proteins S8 and S17. May interact with IF1 in the 30S initiation complex.

Its function is as follows. With S4 and S5 plays an important role in translational accuracy. Interacts with and stabilizes bases of the 16S rRNA that are involved in tRNA selection in the A site and with the mRNA backbone. Located at the interface of the 30S and 50S subunits, it traverses the body of the 30S subunit contacting proteins on the other side and probably holding the rRNA structure together. The combined cluster of proteins S8, S12 and S17 appears to hold together the shoulder and platform of the 30S subunit. The sequence is that of Small ribosomal subunit protein uS12 from Streptococcus pneumoniae (strain ATCC 700669 / Spain 23F-1).